An 876-amino-acid chain; its full sequence is Valine--tRNA ligase (876 aa).

The 'HIGH' region signature appears at 44–54 (PNVTGKLHLGH). Residues 520-524 (KMSKS) carry the 'KMSKS' region motif. Lysine 523 is a binding site for ATP. Residues 805-876 (LEGLIDMDKE…VKARIEQLKA (72 aa)) adopt a coiled-coil conformation.

Belongs to the class-I aminoacyl-tRNA synthetase family. ValS type 1 subfamily. In terms of assembly, monomer.

The protein resides in the cytoplasm. It catalyses the reaction tRNA(Val) + L-valine + ATP = L-valyl-tRNA(Val) + AMP + diphosphate. Functionally, catalyzes the attachment of valine to tRNA(Val). As ValRS can inadvertently accommodate and process structurally similar amino acids such as threonine, to avoid such errors, it has a 'posttransfer' editing activity that hydrolyzes mischarged Thr-tRNA(Val) in a tRNA-dependent manner. This Staphylococcus aureus (strain Mu3 / ATCC 700698) protein is Valine--tRNA ligase.